The chain runs to 120 residues: V-type proton ATPase subunit F (120 aa).

This sequence belongs to the V-ATPase F subunit family. V-ATPase is a heteromultimeric enzyme composed of a peripheral catalytic V1 complex (components A to H) attached to an integral membrane V0 proton pore complex (components: a, c, c', c'' and d).

In terms of biological role, subunit of the peripheral V1 complex of vacuolar ATPase essential for assembly or catalytic function. V-ATPase is responsible for acidifying a variety of intracellular compartments in eukaryotic cells. This is V-type proton ATPase subunit F (vatF) from Dictyostelium discoideum (Social amoeba).